A 763-amino-acid polypeptide reads, in one-letter code: MEQNTDSMVPLPDPSQATKLTSWKNELSLQALKADLDAAKPSHTAMMIKVKEWNDLMRIEGKAKPPKVKGRSQVQPKLVRRQAEWRYSALTEPFLGSNKLFKVTPVTWEDVQGARQNELVLNYQFRTKLNRVSFIDNYVRSVVDDGTGIVRVGWNREIRKEKQEVPVFSLFPIQTQEQADALQQALQLRTDNPRGYEENVDEAIKESVRFFDETGQATYAVQTGTTTTEVEVPLANHPTVEMLNPENIIIDPSCQGDINKAMFAIVSFETCKADLLKEKDRYHNLNKIDWQSSAPVNEPDHATTTPQEFQISDPMRKRVVAYEYWGFWDIEGNGVLEPIVATWIGSTLIRLEKNPYPDGKLPFVLIPYMPVKRDMYGEPDAELLGDNQAVLGAVMRGMIDLLGRSANGQRGMPKGMLDALNSRRYREGEDYEYNPTQNPAQMIIEHKFPELPQSALTMATLQNQEAESLTGVKAFAGGVTGESYGDVAAGIRGVLDAASKREMAILRRLAKGMSEIGNKIIAMNAVFLAEHEVVRITNEEFVTIKREDLKGNFDLEVDISTAEVDNQKSQDLGFMLQTIGPNVDQQITLNILAEIADLKRMPKLAHDLRTWQPQPDPVQEQLKQLAVEKAQLENEELRSKIRLNDAQAQKAMAERDNKNLDYLEQESGTKHARDLEKMKAQSQGNQQLEITKALTKPRKEGELPPNLSAAIGYNALTNGEDTGIQSVSERDIAAEANPAYSLGSSQFDPTRDPALNPGIRLGN.

Positions 668–679 are enriched in basic and acidic residues; it reads GTKHARDLEKMK. Disordered stretches follow at residues 668–706 and 729–763; these read GTKH…LPPN and ERDI…RLGN. Residues 680 to 689 are compositionally biased toward polar residues; it reads AQSQGNQQLE.

In terms of assembly, homododecamer.

It localises to the virion. Its function is as follows. Forms the portal vertex of the capsid. This portal plays critical roles in head assembly, genome packaging, neck/tail attachment, and genome ejection. The portal protein multimerizes as a single ring-shaped homododecamer arranged around a central channel. The chain is Probable portal protein (59) from Escherichia coli (Bacteriophage N4).